Consider the following 392-residue polypeptide: Methylthioribose-1-phosphate isomerase (392 aa).

Aspartate 253 functions as the Proton donor in the catalytic mechanism.

This sequence belongs to the eIF-2B alpha/beta/delta subunits family. MtnA subfamily.

The protein localises to the cytoplasm. Its subcellular location is the nucleus. It carries out the reaction 5-(methylsulfanyl)-alpha-D-ribose 1-phosphate = 5-(methylsulfanyl)-D-ribulose 1-phosphate. The protein operates within amino-acid biosynthesis; L-methionine biosynthesis via salvage pathway; L-methionine from S-methyl-5-thio-alpha-D-ribose 1-phosphate: step 1/6. Catalyzes the interconversion of methylthioribose-1-phosphate (MTR-1-P) into methylthioribulose-1-phosphate (MTRu-1-P). This Pyrenophora tritici-repentis (strain Pt-1C-BFP) (Wheat tan spot fungus) protein is Methylthioribose-1-phosphate isomerase (mri1).